The following is a 317-amino-acid chain: tRNA dimethylallyltransferase (317 aa).

Position 21-28 (21-28 (GPTASGKS)) interacts with ATP. Position 23 to 28 (23 to 28 (TASGKS)) interacts with substrate. The tract at residues 46–49 (DSMQ) is interaction with substrate tRNA.

It belongs to the IPP transferase family. In terms of assembly, monomer. Mg(2+) is required as a cofactor.

The catalysed reaction is adenosine(37) in tRNA + dimethylallyl diphosphate = N(6)-dimethylallyladenosine(37) in tRNA + diphosphate. Its function is as follows. Catalyzes the transfer of a dimethylallyl group onto the adenine at position 37 in tRNAs that read codons beginning with uridine, leading to the formation of N6-(dimethylallyl)adenosine (i(6)A). The chain is tRNA dimethylallyltransferase from Nitrobacter hamburgensis (strain DSM 10229 / NCIMB 13809 / X14).